We begin with the raw amino-acid sequence, 1072 residues long: Carbamoyl phosphate synthase large chain (1072 aa).

The tract at residues M1 to E401 is carboxyphosphate synthetic domain. Positions 129, 169, 175, 176, 208, 210, 215, 241, 242, 243, 284, and 298 each coordinate ATP. The 195-residue stretch at R133–V327 folds into the ATP-grasp 1 domain. Residues Q284, E298, and N300 each coordinate Mg(2+). Mn(2+) is bound by residues Q284, E298, and N300. The segment at L402–S546 is oligomerization domain. The interval I547 to G929 is carbamoyl phosphate synthetic domain. Residues E671 to L861 form the ATP-grasp 2 domain. 9 residues coordinate ATP: R707, R746, E752, G777, V778, H779, S780, Q820, and E832. 3 residues coordinate Mg(2+): Q820, E832, and N834. 3 residues coordinate Mn(2+): Q820, E832, and N834. Positions I930 to A1072 constitute an MGS-like domain. The allosteric domain stretch occupies residues I930–A1072.

The protein belongs to the CarB family. As to quaternary structure, composed of two chains; the small (or glutamine) chain promotes the hydrolysis of glutamine to ammonia, which is used by the large (or ammonia) chain to synthesize carbamoyl phosphate. Tetramer of heterodimers (alpha,beta)4. It depends on Mg(2+) as a cofactor. Mn(2+) is required as a cofactor.

It catalyses the reaction hydrogencarbonate + L-glutamine + 2 ATP + H2O = carbamoyl phosphate + L-glutamate + 2 ADP + phosphate + 2 H(+). The catalysed reaction is hydrogencarbonate + NH4(+) + 2 ATP = carbamoyl phosphate + 2 ADP + phosphate + 2 H(+). It participates in amino-acid biosynthesis; L-arginine biosynthesis; carbamoyl phosphate from bicarbonate: step 1/1. It functions in the pathway pyrimidine metabolism; UMP biosynthesis via de novo pathway; (S)-dihydroorotate from bicarbonate: step 1/3. Its function is as follows. Large subunit of the glutamine-dependent carbamoyl phosphate synthetase (CPSase). CPSase catalyzes the formation of carbamoyl phosphate from the ammonia moiety of glutamine, carbonate, and phosphate donated by ATP, constituting the first step of 2 biosynthetic pathways, one leading to arginine and/or urea and the other to pyrimidine nucleotides. The large subunit (synthetase) binds the substrates ammonia (free or transferred from glutamine from the small subunit), hydrogencarbonate and ATP and carries out an ATP-coupled ligase reaction, activating hydrogencarbonate by forming carboxy phosphate which reacts with ammonia to form carbamoyl phosphate. The sequence is that of Carbamoyl phosphate synthase large chain from Bacillus cereus (strain B4264).